A 241-amino-acid chain; its full sequence is Uridylate kinase (241 aa).

12-15 contributes to the ATP binding site; the sequence is KVSG. The segment at 20–25 is involved in allosteric activation by GTP; it reads GEKGTG. Residue Gly-54 participates in UMP binding. 2 residues coordinate ATP: Gly-55 and Arg-59. UMP contacts are provided by residues Asp-74 and 135–142; that span reads TGNPYFST. Residues Asn-163, Tyr-169, and Asp-172 each coordinate ATP.

The protein belongs to the UMP kinase family. As to quaternary structure, homohexamer.

Its subcellular location is the cytoplasm. The enzyme catalyses UMP + ATP = UDP + ADP. The protein operates within pyrimidine metabolism; CTP biosynthesis via de novo pathway; UDP from UMP (UMPK route): step 1/1. Allosterically activated by GTP. Inhibited by UTP. Its function is as follows. Catalyzes the reversible phosphorylation of UMP to UDP. The protein is Uridylate kinase of Lactobacillus johnsonii (strain CNCM I-12250 / La1 / NCC 533).